Here is a 92-residue protein sequence, read N- to C-terminus: Enhancer of yellow 2 transcription factor (92 aa).

The protein belongs to the ENY2 family. Component of the nuclear pore complex (NPC)-associated TREX-2 complex (transcription and export complex 2). Component of the SAGA transcription coactivator-HAT complex. Within the SAGA complex, participates in a subcomplex of SAGA called the DUB module (deubiquitination module).

It localises to the nucleus. Its subcellular location is the nucleoplasm. Involved in mRNA export coupled transcription activation by association with both the TREX-2 and the SAGA complexes. The transcription regulatory histone acetylation (HAT) complex SAGA is a multiprotein complex that activates transcription by remodeling chromatin and mediating histone acetylation and deubiquitination. Within the SAGA complex, participates in a subcomplex that specifically deubiquitinates histones. The SAGA complex is recruited to specific gene promoters by activators, where it is required for transcription. The TREX-2 complex functions in docking export-competent ribonucleoprotein particles (mRNPs) to the nuclear entrance of the nuclear pore complex (nuclear basket). TREX-2 participates in mRNA export and accurate chromatin positioning in the nucleus by tethering genes to the nuclear periphery. This is Enhancer of yellow 2 transcription factor from Aedes aegypti (Yellowfever mosquito).